We begin with the raw amino-acid sequence, 65 residues long: Carboxypeptidase A inhibitor (65 aa).

This sequence belongs to the protease inhibitor I44 family.

It is found in the secreted. Its function is as follows. Inhibits carboxypeptidase A. The sequence is that of Carboxypeptidase A inhibitor from Ascaris suum (Pig roundworm).